Consider the following 270-residue polypeptide: MSTTSREDAVYLAKLAEQAERYEGMVENMKSVASTDQELTVEERNLLSVAYKNVIGARRASWRIVSSIEQKEESKGNTAQVELIKEYRQKIEQELDTICQDILTVLEKHLIPNAASAESKVFYYKMKGDYYRYLAEFAVGEKRQHSADQSLEGYKAASEIATAELAPTHPIRLGLALNFSVFYYEILNSPDRACYLAKQAFDEAISELDSLSEESYKDSTLIMQLLRDNLTLWTSDAEYSAAAAGGNTEGAQENAPSNAPEGEAEPKADA.

Phosphoserine is present on residues Ser-34 and Ser-66. Residues 242 to 270 (AAAGGNTEGAQENAPSNAPEGEAEPKADA) form a disordered region.

This sequence belongs to the 14-3-3 family. Homodimer. Binds preferentially to mei2 phosphorylated by ran1/pat1. Binds preferentially to cdc25 phosphorylated by srk1 during G2; the interaction is increased during osmotic stress. Interacts with byr2. Interacts with rad25.

It localises to the cytoplasm. Functionally, acts in cell cycle and stress checkpoint signaling by sequestering signal transducers regulated by the checkpoints. Required for the DNA damage checkpoint that ensures that DNA damage is repaired before mitosis is attempted. During environmental stress, sequesters srk1-phosphorylated cdc25 in the cytoplasm to delay the G2/M transition. Sequesters byr2 in the cytoplasm to prevent its translocation to the plasma membrane. Sequesters ran1/pat1-phosphorylated mei2 from its non-coding RNA activators (including meiRNA), to prevent meiotic induction in vegetative cells and to regulate meiosis I. The polypeptide is Checkpoint signal transducer rad24 (Schizosaccharomyces pombe (strain 972 / ATCC 24843) (Fission yeast)).